Reading from the N-terminus, the 546-residue chain is Histidine--tRNA ligase, mitochondrial (546 aa).

A mitochondrion-targeting transit peptide spans 1-20 (MLSRSLNKVVTSIKSSSIIR). Residues 129–131 (DLT), R156, Q172, D176, R326, and 330–331 (YY) contribute to the L-histidine site.

It belongs to the class-II aminoacyl-tRNA synthetase family.

The protein localises to the cytoplasm. It is found in the mitochondrion. It catalyses the reaction tRNA(His) + L-histidine + ATP = L-histidyl-tRNA(His) + AMP + diphosphate + H(+). In terms of biological role, catalyzes the aminoacylation of histidyl-tRNA in both the cytoplasm and the mitochondrion. The polypeptide is Histidine--tRNA ligase, mitochondrial (HTS1) (Saccharomyces cerevisiae (strain ATCC 204508 / S288c) (Baker's yeast)).